The primary structure comprises 300 residues: Formyltetrahydrofolate deformylase (300 aa).

The region spanning 21-102 (RLLVSCPDQP…MTWSLTLASE (82 aa)) is the ACT domain. Residue aspartate 244 is part of the active site.

Belongs to the PurU family.

The catalysed reaction is (6R)-10-formyltetrahydrofolate + H2O = (6S)-5,6,7,8-tetrahydrofolate + formate + H(+). The protein operates within purine metabolism; IMP biosynthesis via de novo pathway; formate from 10-formyl-5,6,7,8-tetrahydrofolate: step 1/1. Functionally, catalyzes the hydrolysis of 10-formyltetrahydrofolate (formyl-FH4) to formate and tetrahydrofolate (FH4). This is Formyltetrahydrofolate deformylase from Bacillus subtilis (strain 168).